The sequence spans 248 residues: 1-(5-phosphoribosyl)-5-[(5-phosphoribosylamino)methylideneamino] imidazole-4-carboxamide isomerase (248 aa).

Asp8 (proton acceptor) is an active-site residue. The Proton donor role is filled by Asp130.

The protein belongs to the HisA/HisF family.

The protein localises to the cytoplasm. It catalyses the reaction 1-(5-phospho-beta-D-ribosyl)-5-[(5-phospho-beta-D-ribosylamino)methylideneamino]imidazole-4-carboxamide = 5-[(5-phospho-1-deoxy-D-ribulos-1-ylimino)methylamino]-1-(5-phospho-beta-D-ribosyl)imidazole-4-carboxamide. It functions in the pathway amino-acid biosynthesis; L-histidine biosynthesis; L-histidine from 5-phospho-alpha-D-ribose 1-diphosphate: step 4/9. This Alkalilimnicola ehrlichii (strain ATCC BAA-1101 / DSM 17681 / MLHE-1) protein is 1-(5-phosphoribosyl)-5-[(5-phosphoribosylamino)methylideneamino] imidazole-4-carboxamide isomerase.